The following is a 215-amino-acid chain: Probable transaldolase (215 aa).

The active-site Schiff-base intermediate with substrate is the Lys83.

Belongs to the transaldolase family. Type 3B subfamily.

It localises to the cytoplasm. It catalyses the reaction D-sedoheptulose 7-phosphate + D-glyceraldehyde 3-phosphate = D-erythrose 4-phosphate + beta-D-fructose 6-phosphate. Its pathway is carbohydrate degradation; pentose phosphate pathway; D-glyceraldehyde 3-phosphate and beta-D-fructose 6-phosphate from D-ribose 5-phosphate and D-xylulose 5-phosphate (non-oxidative stage): step 2/3. Its function is as follows. Transaldolase is important for the balance of metabolites in the pentose-phosphate pathway. This is Probable transaldolase (tal) from Clostridium acetobutylicum (strain ATCC 824 / DSM 792 / JCM 1419 / IAM 19013 / LMG 5710 / NBRC 13948 / NRRL B-527 / VKM B-1787 / 2291 / W).